The sequence spans 154 residues: Protein phosphatase 1 regulatory subunit 27 (154 aa).

ANK repeat units follow at residues 63 to 92 and 96 to 125; these read SGLA…DIHQ and AGWT…DRDA.

As to quaternary structure, interacts with DYSF and PPP1CA.

Its function is as follows. Inhibits phosphatase activity of protein phosphatase 1 (PP1) complexes. The polypeptide is Protein phosphatase 1 regulatory subunit 27 (PPP1R27) (Homo sapiens (Human)).